We begin with the raw amino-acid sequence, 155 residues long: Ribosomal RNA large subunit methyltransferase H (155 aa).

Residues leucine 72, glycine 103, and 122–127 each bind S-adenosyl-L-methionine; that span reads LSPLTL.

It belongs to the RNA methyltransferase RlmH family. As to quaternary structure, homodimer.

It localises to the cytoplasm. It carries out the reaction pseudouridine(1915) in 23S rRNA + S-adenosyl-L-methionine = N(3)-methylpseudouridine(1915) in 23S rRNA + S-adenosyl-L-homocysteine + H(+). Specifically methylates the pseudouridine at position 1915 (m3Psi1915) in 23S rRNA. In Actinobacillus pleuropneumoniae serotype 5b (strain L20), this protein is Ribosomal RNA large subunit methyltransferase H.